The chain runs to 146 residues: Leghemoglobin 1 (146 aa).

Residues 2-146 (GFTAQQDALV…LAAAIKKAMS (145 aa)) enclose the Globin domain. S13 and S14 each carry phosphoserine; by CCAMK. At Y30 the chain carries Nitrated tyrosine. Phosphoserine; by CCAMK occurs at positions 45 and 55. Residue S45 participates in heme b binding. Position 61 (H61) interacts with O2. 3 residues coordinate heme b: K64, H93, and K96. At S123 the chain carries Phosphoserine; by CCAMK. At Y134 the chain carries Nitrated tyrosine.

This sequence belongs to the plant globin family. As to quaternary structure, monomer. Post-translationally, nitrated in effective nodules and particularly in hypoxic conditions; this mechanism may play a protective role in the symbiosis by buffering toxic peroxynitrite NO(2)(-). Nitration level decrease during nodule senescence. Phosphorylated by CCAMK at serine residues in a Ca(2+)-dependent manner; the phosphorylation at Ser-45 disrupts the molecular environment of its porphyrin ring oxygen binding pocket, thus leading to a reduced oxygen consumption and to the delivery of oxygen O(2) to symbiosomes. As to expression, specifically and strongly expressed in root nodules and at low levels in seedlings.

The protein resides in the cytoplasm. Its subcellular location is the cytosol. It is found in the nucleus. Leghemoglobin that reversibly binds oxygen O(2) through a pentacoordinated heme iron. In root nodules, facilitates the diffusion of oxygen to the bacteroids while preventing the bacterial nitrogenase from being inactivated by buffering dioxygen, nitric oxide and carbon monoxide, and promoting the formation of reactive oxygen species (ROS, e.g. H(2)O(2)). This role is essential for symbiotic nitrogen fixation (SNF). This chain is Leghemoglobin 1, found in Lotus japonicus (Lotus corniculatus var. japonicus).